The sequence spans 199 residues: MGSVQDENKDEFKQSLTRGKLKPSSSSSFRLRSPSLNSIRLRRIFDVFDRNHDCLISVEELSQALNLLGLDADLSEIESMVKLHIKPENTGLRFEDFETLHRSLNDVFFGSKCEDKLGLNPDPAQDESDLKEAFDVFDENGDGFISAKELQVVLEKLGLPEGSEIDRVEMMISSVEQDHDGRVDFFEFKDMMRTVIVPS.

Residues 1–13 are compositionally biased toward basic and acidic residues; that stretch reads MGSVQDENKDEFK. The segment at 1-31 is disordered; that stretch reads MGSVQDENKDEFKQSLTRGKLKPSSSSSFRL. EF-hand domains follow at residues 36-71, 75-110, 125-160, and 163-198; these read LNSI…LGLD, SEIE…VFFG, QDES…LGLP, and SEID…VIVP. Residues Asp-49, Asn-51, Asp-53, and Glu-60 each contribute to the Ca(2+) site. Positions 138, 140, 142, 149, 178, 180, 182, and 187 each coordinate Ca(2+).

Functionally, not known. Probably binds 3 calcium ions. This chain is Calcium-binding protein CAST, found in Solanum tuberosum (Potato).